The primary structure comprises 263 residues: MPSLWSNESDGSLREHLVDVVVSGSEPKIRVHDLTRVADDGSRILKGVTIDIPKGMIVGVIGPSGSGKSTFLRSLNRLWEPPESTVFLDGEDITNVDVIALRRRVGMLFQLPVLFQGTVADNVRYGPNLRGEKLSDEEVYKLLSLADLDASFAKKTGAELSVGQAQRVALARTLANEPEVLLLDEPTSALDPISTENIEDVIVKLKKQRGITTVIVSHSIKQIQKVADIVCLVVDGEIVEVLKPSELSHATHPMAQRFLQLSS.

One can recognise an ABC transporter domain in the interval 29-260; the sequence is IRVHDLTRVA…THPMAQRFLQ (232 aa). 62–69 serves as a coordination point for ATP; sequence GPSGSGKS.

This sequence belongs to the ABC transporter superfamily. ABCI family.

The polypeptide is ABC transporter I family member 17 (ABCI17) (Arabidopsis thaliana (Mouse-ear cress)).